Here is a 498-residue protein sequence, read N- to C-terminus: UDP-N-acetylmuramoyl-L-alanyl-D-glutamate--2,6-diaminopimelate ligase (498 aa).

UDP-N-acetyl-alpha-D-muramoyl-L-alanyl-D-glutamate is bound at residue serine 29. Residue 120 to 126 coordinates ATP; that stretch reads GTDGKTS. Residues 162–163, serine 189, glutamine 195, and arginine 197 contribute to the UDP-N-acetyl-alpha-D-muramoyl-L-alanyl-D-glutamate site; that span reads TT. Residue lysine 229 is modified to N6-carboxylysine. Meso-2,6-diaminopimelate-binding positions include arginine 392, 416–419, glycine 466, and glutamate 470; that span reads DNPR. The short motif at 416–419 is the Meso-diaminopimelate recognition motif element; sequence DNPR.

The protein belongs to the MurCDEF family. MurE subfamily. It depends on Mg(2+) as a cofactor. Carboxylation is probably crucial for Mg(2+) binding and, consequently, for the gamma-phosphate positioning of ATP.

It is found in the cytoplasm. It carries out the reaction UDP-N-acetyl-alpha-D-muramoyl-L-alanyl-D-glutamate + meso-2,6-diaminopimelate + ATP = UDP-N-acetyl-alpha-D-muramoyl-L-alanyl-gamma-D-glutamyl-meso-2,6-diaminopimelate + ADP + phosphate + H(+). It participates in cell wall biogenesis; peptidoglycan biosynthesis. Catalyzes the addition of meso-diaminopimelic acid to the nucleotide precursor UDP-N-acetylmuramoyl-L-alanyl-D-glutamate (UMAG) in the biosynthesis of bacterial cell-wall peptidoglycan. This Alkalilimnicola ehrlichii (strain ATCC BAA-1101 / DSM 17681 / MLHE-1) protein is UDP-N-acetylmuramoyl-L-alanyl-D-glutamate--2,6-diaminopimelate ligase.